The sequence spans 120 residues: Large ribosomal subunit protein uL18 (120 aa).

The protein belongs to the universal ribosomal protein uL18 family. As to quaternary structure, part of the 50S ribosomal subunit; part of the 5S rRNA/L5/L18/L25 subcomplex. Contacts the 5S and 23S rRNAs.

In terms of biological role, this is one of the proteins that bind and probably mediate the attachment of the 5S RNA into the large ribosomal subunit, where it forms part of the central protuberance. In Trichodesmium erythraeum (strain IMS101), this protein is Large ribosomal subunit protein uL18.